The following is a 373-amino-acid chain: S-adenosylmethionine:tRNA ribosyltransferase-isomerase (373 aa).

It belongs to the QueA family. As to quaternary structure, monomer.

Its subcellular location is the cytoplasm. The enzyme catalyses 7-aminomethyl-7-carbaguanosine(34) in tRNA + S-adenosyl-L-methionine = epoxyqueuosine(34) in tRNA + adenine + L-methionine + 2 H(+). It participates in tRNA modification; tRNA-queuosine biosynthesis. Its function is as follows. Transfers and isomerizes the ribose moiety from AdoMet to the 7-aminomethyl group of 7-deazaguanine (preQ1-tRNA) to give epoxyqueuosine (oQ-tRNA). The chain is S-adenosylmethionine:tRNA ribosyltransferase-isomerase from Prochlorococcus marinus (strain MIT 9515).